The chain runs to 162 residues: Large ribosomal subunit protein uL22c (162 aa).

It belongs to the universal ribosomal protein uL22 family. Part of the 50S ribosomal subunit.

It is found in the plastid. The protein localises to the chloroplast. Its function is as follows. This protein binds specifically to 23S rRNA. The globular domain of the protein is located near the polypeptide exit tunnel on the outside of the subunit, while an extended beta-hairpin is found that lines the wall of the exit tunnel in the center of the 70S ribosome. The polypeptide is Large ribosomal subunit protein uL22c (rpl22) (Cucumis sativus (Cucumber)).